The sequence spans 215 residues: Nucleoside triphosphate pyrophosphatase (215 aa).

Residue Asp-77 is the Proton acceptor of the active site.

The protein belongs to the Maf family. Requires a divalent metal cation as cofactor.

The protein resides in the cytoplasm. It carries out the reaction a ribonucleoside 5'-triphosphate + H2O = a ribonucleoside 5'-phosphate + diphosphate + H(+). The enzyme catalyses a 2'-deoxyribonucleoside 5'-triphosphate + H2O = a 2'-deoxyribonucleoside 5'-phosphate + diphosphate + H(+). Functionally, nucleoside triphosphate pyrophosphatase. May have a dual role in cell division arrest and in preventing the incorporation of modified nucleotides into cellular nucleic acids. The chain is Nucleoside triphosphate pyrophosphatase from Rickettsia africae (strain ESF-5).